The chain runs to 518 residues: Allene oxide synthase, chloroplastic (518 aa).

A chloroplast-targeting transit peptide spans 1–33; sequence MASISTPFPISLHPKTVRSKPLKFRVLTRPIKA. Lys-133, His-164, and Lys-168 together coordinate heme b. Residues Asn-321 and Thr-389 each contribute to the (13S)-hydroperoxy-(9Z,11E)-octadecadienoate site. The (13S)-hydroperoxy-(9Z,11E,15Z)-octadecatrienoate site is built by Asn-321 and Thr-389. Heme b contacts are provided by Lys-469 and Cys-471.

The protein belongs to the cytochrome P450 family. Heme b is required as a cofactor.

It is found in the plastid. The protein resides in the chloroplast. The protein localises to the plastoglobule. It catalyses the reaction (13S)-hydroperoxy-(9Z,11E,15Z)-octadecatrienoate = (9Z,13S,15Z)-12,13-epoxyoctadeca-9,11,15-trienoate + H2O. The catalysed reaction is (13S)-hydroperoxy-(9Z,11E)-octadecadienoate = (9Z,13S)-12,13-epoxyoctadeca-9,11-dienoate + H2O. The protein operates within lipid metabolism; oxylipin biosynthesis. Cytochrome P450 enzyme involved in the biosynthesis of oxylipin jasmonates, important phytohormones acting as growth regulators and signaling molecules for plant defense. Functions as an allene oxide synthase that converts hydroperoxy fatty acids to unstable allene epoxides. Catalyzes the dehydration of 13-HPOTE ((13S)-hydroperoxy-(9Z,11E,15Z)-octadecatrienoate), as well as 13-HPODE ((13S)-hydroperoxy-(9Z,11E)-octadecadienoate). The sequence is that of Allene oxide synthase, chloroplastic (CYP74A) from Arabidopsis thaliana (Mouse-ear cress).